Consider the following 342-residue polypeptide: Flagellar P-ring protein (342 aa).

The N-terminal stretch at 1–19 is a signal peptide; sequence MKRVFLWLIFVLAFHKLLA.

This sequence belongs to the FlgI family. In terms of assembly, the basal body constitutes a major portion of the flagellar organelle and consists of four rings (L,P,S, and M) mounted on a central rod.

It is found in the periplasm. The protein resides in the bacterial flagellum basal body. Its function is as follows. Assembles around the rod to form the L-ring and probably protects the motor/basal body from shearing forces during rotation. The sequence is that of Flagellar P-ring protein from Helicobacter pylori (strain P12).